The chain runs to 417 residues: Ig-like V-type domain-containing protein FAM187A (417 aa).

An N-terminal signal peptide occupies residues 1 to 18 (MSLAHTTVLLWAWGSLQA). Residues 19–377 (FEIVEKESVF…ASLSDPETRT (359 aa)) lie on the Extracellular side of the membrane. Asn-248 and Asn-318 each carry an N-linked (GlcNAc...) asparagine glycan. The Ig-like V-type domain maps to 268–362 (PWVPQVPIQF…IAGFRLGVIT (95 aa)). A disulfide bond links Cys-290 and Cys-346. The helical transmembrane segment at 378 to 398 (AIELTLMGYLLITIFFITIHL) threads the bilayer. The Cytoplasmic segment spans residues 399–417 (CRCCCQSRCCPNFSAQTLL).

This sequence belongs to the FAM187 family.

The protein localises to the membrane. This chain is Ig-like V-type domain-containing protein FAM187A (Fam187a), found in Mus musculus (Mouse).